A 348-amino-acid polypeptide reads, in one-letter code: L-threonine 3-dehydrogenase (348 aa).

Zn(2+) is bound at residue cysteine 42. Catalysis depends on charge relay system residues threonine 44 and histidine 47. Histidine 67, glutamate 68, cysteine 97, cysteine 100, cysteine 103, and cysteine 111 together coordinate Zn(2+). NAD(+) is bound by residues leucine 179, glutamate 199, arginine 204, 266–268 (LGL), and 291–292 (IT).

This sequence belongs to the zinc-containing alcohol dehydrogenase family. As to quaternary structure, homotetramer. It depends on Zn(2+) as a cofactor.

The protein localises to the cytoplasm. It carries out the reaction L-threonine + NAD(+) = (2S)-2-amino-3-oxobutanoate + NADH + H(+). It functions in the pathway amino-acid degradation; L-threonine degradation via oxydo-reductase pathway; glycine from L-threonine: step 1/2. Catalyzes the NAD(+)-dependent oxidation of L-threonine to 2-amino-3-ketobutyrate. To a lesser extent, also catalyzes the oxidation of L-serine, D-threonine, butan-2,3-diol, butan-1,2-diol, and propan-1,2-diol and cannot oxidize other L-amino acids. Cannot utilize NADP(H) instead of NAD(H). The sequence is that of L-threonine 3-dehydrogenase from Pyrococcus furiosus (strain ATCC 43587 / DSM 3638 / JCM 8422 / Vc1).